A 281-amino-acid polypeptide reads, in one-letter code: Hexaprenyl pyrophosphate synthase (281 aa).

Residues Lys-42, Arg-45, and His-74 each contribute to the isopentenyl diphosphate site. Asp-81 and Asp-85 together coordinate Mg(2+). Arg-91 is an isopentenyl diphosphate binding site.

This sequence belongs to the FPP/GGPP synthase family. Homodimer. Mg(2+) serves as cofactor.

It carries out the reaction 2 isopentenyl diphosphate + (2E,6E,10E)-geranylgeranyl diphosphate = all-trans-hexaprenyl diphosphate + 2 diphosphate. In terms of biological role, catalyzes consecutive E-type condensation of two isopentenyl pyrophosphate (IPP) molecules with an allylic substrate such as geranylgeranyl diphosphate (GGPP), farnesyl diphosphate (FPP) or geranyl diphosphate (GPP) to yield the medium-chain product trans-C30-hexaprenyl pyrophosphate (HexPP). GGPP is the physiological substrate. The chain is Hexaprenyl pyrophosphate synthase (gdS-2) from Saccharolobus solfataricus (strain ATCC 35092 / DSM 1617 / JCM 11322 / P2) (Sulfolobus solfataricus).